The following is a 230-amino-acid chain: Sugar fermentation stimulation protein homolog (230 aa).

This sequence belongs to the SfsA family.

The protein is Sugar fermentation stimulation protein homolog of Clostridium perfringens (strain SM101 / Type A).